Consider the following 197-residue polypeptide: Probable low-affinity putrescine importer PlaP (197 aa).

A run of 5 helical transmembrane segments spans residues 33–53 (GVLI…HAGV), 85–105 (VLLV…TATA), 107–127 (INLG…SQFW), 140–160 (FNYL…WINL), and 163–183 (SSMV…ACVT).

The protein belongs to the amino acid-polyamine-organocation (APC) superfamily.

The protein localises to the cell inner membrane. The enzyme catalyses putrescine(in) + H(+)(in) = putrescine(out) + H(+)(out). Functionally, putrescine importer. The sequence is that of Probable low-affinity putrescine importer PlaP (plaP) from Klebsiella pneumoniae.